The following is a 584-amino-acid chain: Beta-(1--&gt;2)glucan export ATP-binding/permease protein NdvA (584 aa).

One can recognise an ABC transmembrane type-1 domain in the interval 21 to 301; that stretch reads VSLVVAANII…MRQFSTQIFE (281 aa). 6 helical membrane-spanning segments follow: residues 29 to 49, 57 to 77, 136 to 156, 158 to 178, 248 to 268, and 272 to 292; these read IILA…IDAI, DILF…VLVA, THLA…SMDV, LTLV…MVMD, IAST…VQSG, and VGDV…LDQM. The 235-residue stretch at 335 to 569 folds into the ABC transporter domain; sequence VEFRHVSFDF…GGRFAALLHT (235 aa). Residue 368 to 375 participates in ATP binding; sequence GPTGAGKT.

The protein belongs to the ABC transporter superfamily. Beta-(1--&gt;2)glucan exporter (TC 3.A.1.108.1) family. Homodimer.

The protein resides in the cell inner membrane. The enzyme catalyses [(1-&gt;2)-beta-D-glucosyl](n)(in) + ATP + H2O = [(1-&gt;2)-beta-D-glucosyl](n)(out) + ADP + phosphate + H(+). In terms of biological role, involved in beta-(1--&gt;2)glucan export. Transmembrane domains (TMD) form a pore in the inner membrane and the ATP-binding domain (NBD) is responsible for energy generation. The protein is Beta-(1--&gt;2)glucan export ATP-binding/permease protein NdvA of Agrobacterium vitis (Rhizobium vitis).